The following is a 337-amino-acid chain: 4-hydroxyproline 2-epimerase (337 aa).

The active-site Proton acceptor is the C91. Substrate contacts are provided by residues 92 to 93 (GH), D252, and 257 to 258 (GT).

It belongs to the proline racemase family.

The catalysed reaction is trans-4-hydroxy-L-proline = cis-4-hydroxy-D-proline. Catalyzes the epimerization of trans-4-hydroxy-L-proline (t4LHyp) to cis-4-hydroxy-D-proline (c4DHyp). Is involved in a degradation pathway that converts t4LHyp to alpha-ketoglutarate, which allows R.sphaeroides to grow on t4LHyp as a sole carbon source. Displays no proline racemase activity. In Cereibacter sphaeroides (strain ATCC 17023 / DSM 158 / JCM 6121 / CCUG 31486 / LMG 2827 / NBRC 12203 / NCIMB 8253 / ATH 2.4.1.) (Rhodobacter sphaeroides), this protein is 4-hydroxyproline 2-epimerase.